We begin with the raw amino-acid sequence, 205 residues long: Small ribosomal subunit protein uS4 (205 aa).

The interval 1-46 is disordered; sequence MSKRASSKYKIDRRMGENIWGRPKSPVNRREYGPGQHGQRRKGKLS. The S4 RNA-binding domain occupies 94-154; that stretch reads SRLDAIVYRA…QKSKQLAIVL (61 aa).

This sequence belongs to the universal ribosomal protein uS4 family. As to quaternary structure, part of the 30S ribosomal subunit. Contacts protein S5. The interaction surface between S4 and S5 is involved in control of translational fidelity.

Its function is as follows. One of the primary rRNA binding proteins, it binds directly to 16S rRNA where it nucleates assembly of the body of the 30S subunit. Functionally, with S5 and S12 plays an important role in translational accuracy. In Allorhizobium ampelinum (strain ATCC BAA-846 / DSM 112012 / S4) (Agrobacterium vitis (strain S4)), this protein is Small ribosomal subunit protein uS4.